The chain runs to 336 residues: Geranylgeranyl pyrophosphate synthase 6, mitochondrial (336 aa).

The N-terminal 22 residues, 1–22 (MRPRYSLILSAMRLIRPSNRRL), are a transit peptide targeting the mitochondrion. The isopentenyl diphosphate site is built by lysine 80, arginine 83, and histidine 112. 2 residues coordinate Mg(2+): aspartate 119 and aspartate 125. A dimethylallyl diphosphate-binding site is contributed by arginine 130. Residue arginine 131 coordinates isopentenyl diphosphate. Lysine 221, threonine 222, glutamine 259, lysine 276, and lysine 286 together coordinate dimethylallyl diphosphate.

Belongs to the FPP/GGPP synthase family. In terms of assembly, monomer. Mg(2+) is required as a cofactor.

It localises to the mitochondrion. The enzyme catalyses isopentenyl diphosphate + dimethylallyl diphosphate = (2E)-geranyl diphosphate + diphosphate. It carries out the reaction isopentenyl diphosphate + (2E)-geranyl diphosphate = (2E,6E)-farnesyl diphosphate + diphosphate. The catalysed reaction is isopentenyl diphosphate + (2E,6E)-farnesyl diphosphate = (2E,6E,10E)-geranylgeranyl diphosphate + diphosphate. Its pathway is isoprenoid biosynthesis; farnesyl diphosphate biosynthesis; farnesyl diphosphate from geranyl diphosphate and isopentenyl diphosphate: step 1/1. It functions in the pathway isoprenoid biosynthesis; geranyl diphosphate biosynthesis; geranyl diphosphate from dimethylallyl diphosphate and isopentenyl diphosphate: step 1/1. The protein operates within isoprenoid biosynthesis; geranylgeranyl diphosphate biosynthesis; geranylgeranyl diphosphate from farnesyl diphosphate and isopentenyl diphosphate: step 1/1. In terms of biological role, catalyzes the trans-addition of the three molecules of IPP onto DMAPP to form geranylgeranyl pyrophosphate. The chain is Geranylgeranyl pyrophosphate synthase 6, mitochondrial from Arabidopsis thaliana (Mouse-ear cress).